We begin with the raw amino-acid sequence, 2835 residues long: Vanchrobactin synthetase VabF (2835 aa).

The interval 16–452 (EDQWPLIGTQ…IPPSEKQQIT (437 aa)) is condensation 1. Residues 473 to 880 (QQTVESKPNE…GRCDHQIKIR (408 aa)) form an adenylation 1 region. The Carrier 1 domain occupies 988-1062 (APITQPEQLL…MMAGQMVPLQ (75 aa)). An O-(pantetheine 4'-phosphoryl)serine modification is found at S1023. 2 condensation regions span residues 1081-1499 (WFEE…KIQQ) and 1539-1961 (DVLP…EWDL). The interval 1992–2394 (QQQRSPHQLA…GRSDDQIKIR (403 aa)) is adenylation 2. In terms of domain architecture, Carrier 2 spans 2503 to 2578 (NAHPGLETQL…KLASLLLDDD (76 aa)). S2538 is modified (O-(pantetheine 4'-phosphoryl)serine). Positions 2601 to 2821 (ALFCVNSASG…APENVRQIGE (221 aa)) are thioesterase.

This sequence belongs to the NRP synthetase family. Requires pantetheine 4'-phosphate as cofactor.

The enzyme catalyses holo-[peptidyl-carrier protein] + L-arginine + ATP = L-arginyl-[peptidyl-carrier protein] + AMP + diphosphate. The catalysed reaction is holo-[peptidyl-carrier protein] + L-serine + ATP = L-seryl-[peptidyl-carrier protein] + AMP + diphosphate. It functions in the pathway siderophore biosynthesis. Functionally, involved in the synthesis of the siderophore vanchrobactin. Probably adenylates L-arginine via its first adenylation domain and loads it onto its first peptidyl carrier domain via a thioester linkage to the phosphopanthetheine moiety. In addition, may adenylate L-serine via its second adenylation domain and loads it onto its second peptidyl carrier domain via a thioester linkage to the phosphopanthetheine moiety. The thioesterase domain may release vanchrobactin after condensation of the siderophore components. This chain is Vanchrobactin synthetase VabF, found in Vibrio anguillarum (Listonella anguillarum).